We begin with the raw amino-acid sequence, 165 residues long: LIM domain transcription factor LMO4.2 (165 aa).

2 LIM zinc-binding domains span residues 21–83 and 85–147; these read KRCA…LFGN and GACS…ALIN.

In terms of biological role, acts as a positive cofactor of GATA transcription factors to establish the identity of the ventral mesoderm during gastrulation. Down-regulation in the dorsal mesoderm is necessary for the proper formation of this territory since, when present, lmo4 may bind ldb1 and restrict the availability of this cofactor for Spemman organizer transcription factors. At neurula stages, suppresses primary neuron differentiation and modulates gene expression at the Isthmic Organizer of the midbrain-hindbrain boundary. This Xenopus tropicalis (Western clawed frog) protein is LIM domain transcription factor LMO4.2 (lmo4.2).